Reading from the N-terminus, the 426-residue chain is Histidine--tRNA ligase (426 aa).

Belongs to the class-II aminoacyl-tRNA synthetase family. In terms of assembly, homodimer.

It is found in the cytoplasm. The catalysed reaction is tRNA(His) + L-histidine + ATP = L-histidyl-tRNA(His) + AMP + diphosphate + H(+). The chain is Histidine--tRNA ligase from Streptococcus agalactiae serotype III (strain NEM316).